The sequence spans 215 residues: N-(5'-phosphoribosyl)anthranilate isomerase (215 aa).

This sequence belongs to the TrpF family.

It catalyses the reaction N-(5-phospho-beta-D-ribosyl)anthranilate = 1-(2-carboxyphenylamino)-1-deoxy-D-ribulose 5-phosphate. Its pathway is amino-acid biosynthesis; L-tryptophan biosynthesis; L-tryptophan from chorismate: step 3/5. In Cellvibrio japonicus (strain Ueda107) (Pseudomonas fluorescens subsp. cellulosa), this protein is N-(5'-phosphoribosyl)anthranilate isomerase.